A 99-amino-acid chain; its full sequence is Small ribosomal subunit protein uS14 (99 aa).

This sequence belongs to the universal ribosomal protein uS14 family. Part of the 30S ribosomal subunit. Contacts proteins S3 and S10.

In terms of biological role, binds 16S rRNA, required for the assembly of 30S particles and may also be responsible for determining the conformation of the 16S rRNA at the A site. This chain is Small ribosomal subunit protein uS14, found in Bacteroides fragilis (strain ATCC 25285 / DSM 2151 / CCUG 4856 / JCM 11019 / LMG 10263 / NCTC 9343 / Onslow / VPI 2553 / EN-2).